We begin with the raw amino-acid sequence, 257 residues long: GTP cyclohydrolase FolE2 (257 aa).

It belongs to the GTP cyclohydrolase IV family.

The enzyme catalyses GTP + H2O = 7,8-dihydroneopterin 3'-triphosphate + formate + H(+). It participates in cofactor biosynthesis; 7,8-dihydroneopterin triphosphate biosynthesis; 7,8-dihydroneopterin triphosphate from GTP: step 1/1. In terms of biological role, converts GTP to 7,8-dihydroneopterin triphosphate. This Dictyoglomus turgidum (strain DSM 6724 / Z-1310) protein is GTP cyclohydrolase FolE2.